We begin with the raw amino-acid sequence, 1015 residues long: Proline-rich basic protein 1 (1015 aa).

7 disordered regions span residues 1-111, 139-164, 196-236, 259-460, 488-678, 690-883, and 991-1015; these read MLTA…SGEM, AFISPLPPGPASPAAVPRQSQVPDGG, GAAP…RTGS, LSPE…ILSQ, DAVE…APAH, VVPH…GKVL, and PPLLLCAPPSSSGPTQPGKGSLFPL. Gly residues predominate over residues 84–94; the sequence is PGSGFPRGPGS. Low complexity predominate over residues 220-233; it reads PRAAGAPRPRLLLR. The span at 267 to 276 shows a compositional bias: polar residues; sequence SSATFGSTGR. Basic and acidic residues-rich tracts occupy residues 277–304, 318–328, and 346–367; these read SEPETRETARSTHVVLEKAKSRPLRVRD, LRERAIRRDKP, and SEEKIQEARKTRFPREAPDRTV. A compositionally biased stretch (low complexity) spans 380–391; it reads PSEVPSRAVRPR. Polar residues predominate over residues 531 to 542; sequence IAFTQEAQNGLT. Composition is skewed to pro residues over residues 548 to 557 and 691 to 700; these read PPTPSAPGTP and VPHPYEPPEP. Basic and acidic residues predominate over residues 759 to 774; the sequence is ENRDVEAQRLVPDGDG. Pro residues predominate over residues 813-825; that stretch reads GIAPKPKTPPTAP. 2 stretches are compositionally biased toward low complexity: residues 826–835 and 847–858; these read EPAAAVQAPL and APAQPRAASAPP. Residues 861-870 are compositionally biased toward polar residues; that stretch reads RSPQSPSQGA. Positions 993-1004 are enriched in low complexity; the sequence is LLLCAPPSSSGP.

The polypeptide is Proline-rich basic protein 1 (PROB1) (Homo sapiens (Human)).